We begin with the raw amino-acid sequence, 240 residues long: 4-hydroxy-tetrahydrodipicolinate reductase (240 aa).

Residue 7–12 coordinates NAD(+); it reads GLSGTM. Residue K35 coordinates NADP(+). Residues 74–76 and 98–101 contribute to the NAD(+) site; these read GTT and ATNM. H131 acts as the Proton donor/acceptor in catalysis. H132 is a (S)-2,3,4,5-tetrahydrodipicolinate binding site. The Proton donor role is filled by K135. A (S)-2,3,4,5-tetrahydrodipicolinate-binding site is contributed by 141-142; it reads GS.

It belongs to the DapB family.

It localises to the cytoplasm. It catalyses the reaction (S)-2,3,4,5-tetrahydrodipicolinate + NAD(+) + H2O = (2S,4S)-4-hydroxy-2,3,4,5-tetrahydrodipicolinate + NADH + H(+). It carries out the reaction (S)-2,3,4,5-tetrahydrodipicolinate + NADP(+) + H2O = (2S,4S)-4-hydroxy-2,3,4,5-tetrahydrodipicolinate + NADPH + H(+). Its pathway is amino-acid biosynthesis; L-lysine biosynthesis via DAP pathway; (S)-tetrahydrodipicolinate from L-aspartate: step 4/4. Catalyzes the conversion of 4-hydroxy-tetrahydrodipicolinate (HTPA) to tetrahydrodipicolinate. This is 4-hydroxy-tetrahydrodipicolinate reductase from Alkaliphilus metalliredigens (strain QYMF).